The following is a 69-amino-acid chain: Small ribosomal subunit protein bS21 (69 aa).

It belongs to the bacterial ribosomal protein bS21 family.

In Borrelia duttonii (strain Ly), this protein is Small ribosomal subunit protein bS21.